The primary structure comprises 139 residues: Protein archease (139 aa).

Residues Asp12, Asp138, and Ile139 each contribute to the Ca(2+) site.

It belongs to the archease family.

Its function is as follows. Activates the tRNA-splicing ligase complex by facilitating the enzymatic turnover of catalytic subunit RtcB. Acts by promoting the guanylylation of RtcB, a key intermediate step in tRNA ligation. Can also alter the NTP specificity of RtcB such that ATP, dGTP or ITP is used efficiently. This is Protein archease from Saccharolobus islandicus (strain Y.N.15.51 / Yellowstone #2) (Sulfolobus islandicus).